We begin with the raw amino-acid sequence, 519 residues long: MTSPSTSDKDRVVIFDTTLRDGEQCPGATMTHEEKLEVAEMLDTMGVDIIEAGFPIASVGDFEAVAEIAKRANNAVIAGLARAIPADIVRAGEAVRHAKRGRIHTFVSTSPIHLAHQMRKSEEDVLGIITATVAQARNLVDDVEWSAMDSTRTPIDYLCRCVETAIAAGATTINLPDTVGYAVPEEYRRMFKVIRERVPNADKAVFSVHCHDDLGLAVANSLAGVEGGARQIECTINGIGERAGNAALEEVVMAIKTRGDVMPYWCNVESTTLTRASKVVSAATSFPVQYNKAIVGRNAFAHESGIHQDGVLKNAQTYEIMTPESVGVKQTSLVMGKHSGRHAFQHKLRELGYELADNQLQDAFVRFKALADRKKDIYDEDIEALVDQELAQTHDRLRLVSLTVIAGTHGPQRATMKVEVDGKVRIDEAEGNGPVDAVFNAVKTLVPHEAKLELYQVHAVTAGTDAQAEVSVRLSQDGRSVTARSSDPDTLVASAKAYLSALNKIISRQQREAPVAAAS.

The Pyruvate carboxyltransferase domain occupies 12 to 274; sequence VVIFDTTLRD…WCNVESTTLT (263 aa). 4 residues coordinate Mn(2+): D21, H209, H211, and N245. A regulatory domain region spans residues 398 to 519; that stretch reads RLVSLTVIAG…QREAPVAAAS (122 aa).

This sequence belongs to the alpha-IPM synthase/homocitrate synthase family. LeuA type 1 subfamily. As to quaternary structure, homodimer. It depends on Mn(2+) as a cofactor.

The protein resides in the cytoplasm. It carries out the reaction 3-methyl-2-oxobutanoate + acetyl-CoA + H2O = (2S)-2-isopropylmalate + CoA + H(+). It functions in the pathway amino-acid biosynthesis; L-leucine biosynthesis; L-leucine from 3-methyl-2-oxobutanoate: step 1/4. Its function is as follows. Catalyzes the condensation of the acetyl group of acetyl-CoA with 3-methyl-2-oxobutanoate (2-ketoisovalerate) to form 3-carboxy-3-hydroxy-4-methylpentanoate (2-isopropylmalate). The protein is 2-isopropylmalate synthase of Afipia carboxidovorans (strain ATCC 49405 / DSM 1227 / KCTC 32145 / OM5) (Oligotropha carboxidovorans).